Here is a 209-residue protein sequence, read N- to C-terminus: CASP-like protein 2A1 (209 aa).

The Cytoplasmic portion of the chain corresponds to 1 to 38 (MSKMAEEKVLAAPATVDGGMQSSGDLQASSAAAARVRP). Residues 39-59 (VETLLRAAPLGLCVAAMAIML) form a helical membrane-spanning segment. At 60 to 80 (RNSVTNEYGTVSYSDLGGFKY) the chain is on the extracellular side. Residues 81-101 (LVYANGLCAAYSLASAFYIAV) traverse the membrane as a helical segment. At 102 to 109 (PRPATLSR) the chain is on the cytoplasmic side. Residues 110 to 130 (SWVVFLLDQVFTYLILAAGAA) traverse the membrane as a helical segment. Topologically, residues 131–163 (SAELLYLAYNGDKEVTWSEACGVFGGFCRQART) are extracellular. A helical membrane pass occupies residues 164–184 (SVAITFASVACYILLSLISSY). At 185-209 (RLFSAYDPPQPSLGNKGVEIAAFPR) the chain is on the cytoplasmic side.

This sequence belongs to the Casparian strip membrane proteins (CASP) family. In terms of assembly, homodimer and heterodimers.

It localises to the cell membrane. This Oryza sativa subsp. indica (Rice) protein is CASP-like protein 2A1.